Here is a 402-residue protein sequence, read N- to C-terminus: NADH-quinone oxidoreductase subunit D 2 (402 aa).

This sequence belongs to the complex I 49 kDa subunit family. As to quaternary structure, NDH-1 is composed of 14 different subunits. Subunits NuoB, C, D, E, F, and G constitute the peripheral sector of the complex.

The protein localises to the cell inner membrane. It carries out the reaction a quinone + NADH + 5 H(+)(in) = a quinol + NAD(+) + 4 H(+)(out). Its function is as follows. NDH-1 shuttles electrons from NADH, via FMN and iron-sulfur (Fe-S) centers, to quinones in the respiratory chain. The immediate electron acceptor for the enzyme in this species is believed to be ubiquinone. Couples the redox reaction to proton translocation (for every two electrons transferred, four hydrogen ions are translocated across the cytoplasmic membrane), and thus conserves the redox energy in a proton gradient. The polypeptide is NADH-quinone oxidoreductase subunit D 2 (Nitrobacter hamburgensis (strain DSM 10229 / NCIMB 13809 / X14)).